The chain runs to 120 residues: uncharacterized protein (120 aa).

Helical transmembrane passes span 20-39 (FFWP…CYLL), 52-71 (GSSL…LFSI), and 86-108 (ILVV…SIIG).

It localises to the cell membrane. This is an uncharacterized protein from Pasteurella multocida (strain Pm70).